The chain runs to 966 residues: RNA polymerase-associated protein RapA (966 aa).

The Helicase ATP-binding domain maps to 163–337; that stretch reads EVGQRLHPRV…FARLKLLDAD (175 aa). 176–183 contributes to the ATP binding site; the sequence is DEVGLGKT. Positions 283–286 match the DEAH box motif; sequence DEAH. A Helicase C-terminal domain is found at 488–642; that stretch reads RVEWLITFLK…ICPMGMALFE (155 aa).

This sequence belongs to the SNF2/RAD54 helicase family. RapA subfamily. Interacts with the RNAP. Has a higher affinity for the core RNAP than for the holoenzyme. Its ATPase activity is stimulated by binding to RNAP.

In terms of biological role, transcription regulator that activates transcription by stimulating RNA polymerase (RNAP) recycling in case of stress conditions such as supercoiled DNA or high salt concentrations. Probably acts by releasing the RNAP, when it is trapped or immobilized on tightly supercoiled DNA. Does not activate transcription on linear DNA. Probably not involved in DNA repair. In Actinobacillus succinogenes (strain ATCC 55618 / DSM 22257 / CCUG 43843 / 130Z), this protein is RNA polymerase-associated protein RapA.